Here is a 202-residue protein sequence, read N- to C-terminus: 3-isopropylmalate dehydratase small subunit (202 aa).

This sequence belongs to the LeuD family. LeuD type 1 subfamily. In terms of assembly, heterodimer of LeuC and LeuD.

The catalysed reaction is (2R,3S)-3-isopropylmalate = (2S)-2-isopropylmalate. It functions in the pathway amino-acid biosynthesis; L-leucine biosynthesis; L-leucine from 3-methyl-2-oxobutanoate: step 2/4. Its function is as follows. Catalyzes the isomerization between 2-isopropylmalate and 3-isopropylmalate, via the formation of 2-isopropylmaleate. The sequence is that of 3-isopropylmalate dehydratase small subunit from Novosphingobium aromaticivorans (strain ATCC 700278 / DSM 12444 / CCUG 56034 / CIP 105152 / NBRC 16084 / F199).